A 573-amino-acid polypeptide reads, in one-letter code: Probable D-xylulose kinase A (573 aa).

Residues H97, R168, D284, and N285 each contribute to the substrate site. ATP-binding positions include W366, 471–472 (GG), and N475.

This sequence belongs to the FGGY kinase family.

The protein localises to the cytoplasm. The catalysed reaction is D-xylulose + ATP = D-xylulose 5-phosphate + ADP + H(+). Highly specific D-xylulose kinase which participates in the catabolism of xylose. Xylose is a major component of hemicelluloses such as xylan. Most fungi utilize D-xylose via three enzymatic reactions, xylose reductase (XR), xylitol dehydrogenase (XDH), and xylulokinase, to form xylulose 5-phosphate, which enters pentose phosphate pathway. This Neosartorya fischeri (strain ATCC 1020 / DSM 3700 / CBS 544.65 / FGSC A1164 / JCM 1740 / NRRL 181 / WB 181) (Aspergillus fischerianus) protein is Probable D-xylulose kinase A (xkiA).